Here is a 280-residue protein sequence, read N- to C-terminus: S-methyl-5'-thioadenosine phosphorylase (280 aa).

Phosphate-binding positions include Ser18, 60–61 (RH), and 93–94 (TA). Substrate is bound at residue Met196. Thr197 lines the phosphate pocket. 220 to 222 (DYD) provides a ligand contact to substrate.

It belongs to the PNP/MTAP phosphorylase family. MTAP subfamily. Homotrimer.

It is found in the cytoplasm. It localises to the nucleus. It catalyses the reaction S-methyl-5'-thioadenosine + phosphate = 5-(methylsulfanyl)-alpha-D-ribose 1-phosphate + adenine. The protein operates within amino-acid biosynthesis; L-methionine biosynthesis via salvage pathway; S-methyl-5-thio-alpha-D-ribose 1-phosphate from S-methyl-5'-thioadenosine (phosphorylase route): step 1/1. Functionally, catalyzes the reversible phosphorylation of S-methyl-5'-thioadenosine (MTA) to adenine and 5-methylthioribose-1-phosphate. Involved in the breakdown of MTA, a major by-product of polyamine biosynthesis. Responsible for the first step in the methionine salvage pathway after MTA has been generated from S-adenosylmethionine. Has broad substrate specificity with 6-aminopurine nucleosides as preferred substrates. The polypeptide is S-methyl-5'-thioadenosine phosphorylase (Ciona intestinalis (Transparent sea squirt)).